The following is a 492-amino-acid chain: E3 ubiquitin-protein ligase XIAP (492 aa).

BIR repeat units lie at residues Arg-40–Asn-105, Arg-172–Leu-237, and Arg-271–Ile-334. Zn(2+)-binding residues include Cys-303, Cys-306, His-323, and Cys-330. The segment at Cys-445–Cys-480 adopts an RING-type zinc-finger fold.

It belongs to the IAP family. As to quaternary structure, monomer, and homodimer. Post-translationally, degraded in a 2-step mechanism; a caspase-independent first step and a caspase-dependent second step. Stabilized indirectly by MAPK, which acts to delay caspase activation, rather than directly phosphorylating xiap.

The protein resides in the cytoplasm. The catalysed reaction is S-ubiquitinyl-[E2 ubiquitin-conjugating enzyme]-L-cysteine + [acceptor protein]-L-lysine = [E2 ubiquitin-conjugating enzyme]-L-cysteine + N(6)-ubiquitinyl-[acceptor protein]-L-lysine.. In terms of biological role, multi-functional protein which regulates not only caspases and apoptosis, but also acts as an E3 ubiquitin-protein ligase mediating ubiquitination and subsequent proteasomal degradation of its target proteins. Acts as a direct caspase inhibitor. E3 ubiquitin-protein ligase that acts as an important regulator of innate immunity by mediating 'Lys-63'-linked polyubiquitination of ripk2 downstream of NOD1 and NOD2, thereby transforming ripk2 into a scaffolding protein for downstream effectors, ultimately leading to activation of the NF-kappa-B and MAP kinases signaling. A key apoptotic suppressor in eggs. Acts as a positive regulator of Wnt signaling. This chain is E3 ubiquitin-protein ligase XIAP (xiap), found in Xenopus tropicalis (Western clawed frog).